Reading from the N-terminus, the 813-residue chain is Raf homolog serine/threonine-protein kinase (813 aa).

Residues 1-79 are disordered; it reads MSRINFKKSS…GGAGTSDKEP (79 aa). Positions 9-23 are enriched in low complexity; sequence SSASTTPTSPHCPSP. Positions 85 to 161 constitute an RBD domain; sequence KMIMVHLPFD…PGNELWVHSE (77 aa). The Phorbol-ester/DAG-type zinc finger occupies 170-217; sequence KHAIVRRTFIPPKSCDVCNNPIWMMGFRCEFCQFKFHQRCSSFAPLYC. Zn(2+) is bound by residues cysteine 184, cysteine 187, cysteine 198, cysteine 201, histidine 206, cysteine 209, and cysteine 217. 2 stretches are compositionally biased toward polar residues: residues 258–273 and 291–301; these read TSGQ…SHPD and SPQNETSQLSP. Disordered regions lie at residues 258–315, 338–358, and 383–472; these read TSGQ…SAPN, QRLE…QARH, and TPLG…PHHE. The segment covering 338–348 has biased composition (basic and acidic residues); it reads QRLEEESRDKT. Positions 386–399 are enriched in low complexity; sequence GSNSPSSTCSSPPG. Over residues 406-421 the composition is skewed to polar residues; the sequence is TLGQSPNVSGSTTSSL. Residues 453 to 462 are compositionally biased toward basic and acidic residues; sequence SPGERLDAQR. One can recognise a Protein kinase domain in the interval 481-748; the sequence is FIIQYKVGSG…VLERLRDIIL (268 aa). ATP contacts are provided by residues 487–495 and lysine 507; that span reads VGSGSFGTV. The active-site Proton acceptor is the aspartate 602.

The protein belongs to the protein kinase superfamily. TKL Ser/Thr protein kinase family. RAF subfamily. Interacts with cdf-1 in a zinc-dependent manner which promotes its activity. Zn(2+) is required as a cofactor.

The enzyme catalyses L-seryl-[protein] + ATP = O-phospho-L-seryl-[protein] + ADP + H(+). It catalyses the reaction L-threonyl-[protein] + ATP = O-phospho-L-threonyl-[protein] + ADP + H(+). In terms of biological role, protein kinase that participates in the induction of vulva and has roles in fertility and viability. Acts downstream of the Ras protein let-60. Required for progression of developing oocytes through the pachytene stage. Plays a role in responses to M.nematophilum-mediated bacterial infection by promoting tail swelling and preventing constipation. Positively regulates lifespan upstream of mek-2 and mpk-1. In Caenorhabditis elegans, this protein is Raf homolog serine/threonine-protein kinase (lin-45).